Consider the following 693-residue polypeptide: Testis-specific Y-encoded-like protein 2 (693 aa).

2 disordered regions span residues 1–56 (MDRP…EAAQ) and 104–125 (GYGEAPPPTESLEALPTPEASG). A Glycyl lysine isopeptide (Lys-Gly) (interchain with G-Cter in SUMO2) cross-link involves residue Lys11. A phosphoserine mark is found at Ser18 and Ser20. The span at 23–44 (RDPPPPPPPPPLLRLPLPPPQQ) shows a compositional bias: pro residues. Residues Lys163 and Lys165 each participate in a glycyl lysine isopeptide (Lys-Gly) (interchain with G-Cter in SUMO2) cross-link. The disordered stretch occupies residues 175–207 (EDEDERESMRSSRRRRRRRRRKQRKVKRESRER). A compositionally biased stretch (basic residues) spans 185 to 202 (SSRRRRRRRRRKQRKVKR). The residue at position 340 (Thr340) is a Phosphothreonine. 2 disordered regions span residues 474–605 (ENIC…DIEY) and 627–693 (ISDE…GKTG). Polar residues predominate over residues 487-496 (VPNNETTDNN). The span at 509 to 519 (ESADDNNENPE) shows a compositional bias: acidic residues. Residues 531-542 (NPNNNENTYGNN) show a composition bias toward low complexity. 2 stretches are compositionally biased toward acidic residues: residues 559 to 602 (SDSD…DDRD) and 627 to 675 (ISDE…DLED). A phosphoserine mark is found at Ser658, Ser668, and Ser671.

Belongs to the nucleosome assembly protein (NAP) family. As to quaternary structure, interacts with histones. Interacts with CASK. Part of a complex containing CASK, TBR1 and TSPYL2. Post-translationally, phosphorylation at Ser-20 and/or Thr-340 impairs function on cell proliferation. In terms of tissue distribution, ubiquitously expressed, with highest levels in brain, testis and heart, and lowest levels in liver and pancreas.

The protein resides in the nucleus. The protein localises to the cytoplasm. Its function is as follows. Part of the CASK/TBR1/TSPYL2 transcriptional complex which modulates gene expression in response to neuronal synaptic activity, probably by facilitating nucleosome assembly. May inhibit cell proliferation by inducing p53-dependent CDKN1A expression. The polypeptide is Testis-specific Y-encoded-like protein 2 (TSPYL2) (Homo sapiens (Human)).